Consider the following 184-residue polypeptide: ADP-ribosylation factor-like protein 2 (184 aa).

G2 carries N-myristoyl glycine lipidation. 23–30 lines the GTP pocket; sequence GLDNAGKT. Position 45 is a phosphoserine (S45). GTP is bound by residues 66–70 and G68; that span reads DVGGQ. K71 is covalently cross-linked (Glycyl lysine isopeptide (Lys-Gly) (interchain with G-Cter in ubiquitin)). 125-128 is a GTP binding site; sequence NKQD.

The protein belongs to the small GTPase superfamily. Arf family. As to quaternary structure, found in a complex with ARL2, ARL2BP and SLC25A6. Found in a complex with at least ARL2, PPP2CB, PPP2R1A, PPP2R2A, PPP2R5E and TBCD. Interacts with ELMOD2. The GTP-bound form interacts with ARL2BP. The GDP-bound form interacts preferentially with TBCD. Interacts with UNC119. Found in a complex with ARL2, ARL2BP and SLC25A4. The GTP-bound form interacts with PDE6D. Not N-myristoylated. Expressed in brain, retina, lung, cerebellum, liver, kidney, hippocampus, spleen, cortex and heart (at protein level).

The protein resides in the mitochondrion intermembrane space. It localises to the cytoplasm. The protein localises to the cytoskeleton. It is found in the microtubule organizing center. Its subcellular location is the centrosome. The protein resides in the nucleus. In terms of biological role, small GTP-binding protein which cycles between an inactive GDP-bound and an active GTP-bound form, and the rate of cycling is regulated by guanine nucleotide exchange factors (GEF) and GTPase-activating proteins (GAP). GTP-binding protein that does not act as an allosteric activator of the cholera toxin catalytic subunit. Regulates formation of new microtubules and centrosome integrity. Prevents the TBCD-induced microtubule destruction. Participates in association with TBCD, in the disassembly of the apical junction complexes. Antagonizes the effect of TBCD on epithelial cell detachment and tight and adherens junctions disassembly. Together with ARL2, plays a role in the nuclear translocation, retention and transcriptional activity of STAT3. Component of a regulated secretory pathway involved in Ca(2+)-dependent release of acetylcholine. Required for normal progress through the cell cycle. The polypeptide is ADP-ribosylation factor-like protein 2 (Arl2) (Rattus norvegicus (Rat)).